A 199-amino-acid chain; its full sequence is Inosine triphosphate pyrophosphatase (199 aa).

Residue 12-17 (TGNAKK) participates in ITP binding. Glu-42 contacts Mg(2+). ITP is bound by residues Lys-54, 70-71 (DT), Lys-87, 146-149 (FGWD), Lys-169, and 174-175 (HR).

The protein belongs to the HAM1 NTPase family. Homodimer. It depends on Mg(2+) as a cofactor. Mn(2+) is required as a cofactor.

The protein localises to the cytoplasm. The enzyme catalyses ITP + H2O = IMP + diphosphate + H(+). It carries out the reaction dITP + H2O = dIMP + diphosphate + H(+). It catalyses the reaction XTP + H2O = XMP + diphosphate + H(+). Its function is as follows. Pyrophosphatase that hydrolyzes non-canonical purine nucleotides such as inosine triphosphate (ITP), deoxyinosine triphosphate (dITP) or xanthosine 5'-triphosphate (XTP) to their respective monophosphate derivatives. The enzyme does not distinguish between the deoxy- and ribose forms. Probably excludes non-canonical purines from RNA and DNA precursor pools, thus preventing their incorporation into RNA and DNA and avoiding chromosomal lesions. This is Inosine triphosphate pyrophosphatase from Monosiga brevicollis (Choanoflagellate).